Here is a 23-residue protein sequence, read N- to C-terminus: Dermaseptin III-like peptide (23 aa).

As to expression, expressed by the skin glands.

It localises to the secreted. Functionally, possesses a potent antimicrobial activity against bacteria, fungi and protozoa. Probably acts by disturbing membrane functions with its amphipathic structure. The protein is Dermaseptin III-like peptide of Phyllomedusa burmeisteri (Brazilian common walking leaf frog).